Consider the following 191-residue polypeptide: Ribonuclease HII (191 aa).

The RNase H type-2 domain maps to 7 to 191; that stretch reads ILMAGVDEVG…YSPVADLISK (185 aa). D13, E14, and D103 together coordinate a divalent metal cation.

It belongs to the RNase HII family. Mn(2+) serves as cofactor. It depends on Mg(2+) as a cofactor.

The protein localises to the cytoplasm. It carries out the reaction Endonucleolytic cleavage to 5'-phosphomonoester.. Endonuclease that specifically degrades the RNA of RNA-DNA hybrids. In Legionella pneumophila subsp. pneumophila (strain Philadelphia 1 / ATCC 33152 / DSM 7513), this protein is Ribonuclease HII.